Consider the following 265-residue polypeptide: (-)-isopiperitenol/(-)-carveol dehydrogenase, mitochondrial (265 aa).

The transit peptide at 1-30 (MASVKKLAGKVAIVTGGASGIGEVTARLFA) directs the protein to the mitochondrion. 13–38 (IVTGGASGIGEVTARLFAERGARAVV) contributes to the NAD(+) binding site. Ser147 lines the substrate pocket. Tyr160 (proton acceptor) is an active-site residue.

Belongs to the short-chain dehydrogenases/reductases (SDR) family. Homodimer and homotetramer. As to expression, peltate glandular trichomes.

It is found in the mitochondrion. It carries out the reaction (1S,6R)-isopiperitenol + NAD(+) = (6R)-isopiperitenone + NADH + H(+). The enzyme catalyses (1S,5R)-carveol + NADP(+) = (R)-carvone + NADPH + H(+). In terms of biological role, involved in the biosynthesis of menthol and related monoterpenes in leaves. Can use (-)-trans-carveol and, with a lower relative velocity, (-)-trans-isopiperitenol, (+)-neomenthol, (+)-neoisomenthol and (-)-cis-isopiperitenol as substrates, but not (-)-cis-carvenol, (-)-menthol, (+)-isomenthol, 7-hydroxy-limonene, (-)-isopiperitenone or (-)-carvone. This Mentha piperita (Peppermint) protein is (-)-isopiperitenol/(-)-carveol dehydrogenase, mitochondrial.